The sequence spans 226 residues: MYLLIPAAGMGKRMGSDRNKLLLTLHGKPLLAWTLLAAMESRAIIWIGIMAQPEDFEEIRAIITPINALKPVQIIQGGETRQKSVYNGLQALPEGAETVLIHDGARCLATPELFDRCAAALATCQGFIAAIPVKDTIKIVDSKGWIEDTPDRSRLWAAQTPQGFQVKLLKECHEQGRKLDWEVTDDAALLEKCGFPVKIVVGEETNLKITTPGDLAIAEYILSQRL.

The protein belongs to the IspD/TarI cytidylyltransferase family. IspD subfamily.

It catalyses the reaction 2-C-methyl-D-erythritol 4-phosphate + CTP + H(+) = 4-CDP-2-C-methyl-D-erythritol + diphosphate. Its pathway is isoprenoid biosynthesis; isopentenyl diphosphate biosynthesis via DXP pathway; isopentenyl diphosphate from 1-deoxy-D-xylulose 5-phosphate: step 2/6. Its function is as follows. Catalyzes the formation of 4-diphosphocytidyl-2-C-methyl-D-erythritol from CTP and 2-C-methyl-D-erythritol 4-phosphate (MEP). The protein is 2-C-methyl-D-erythritol 4-phosphate cytidylyltransferase of Microcystis aeruginosa (strain NIES-843 / IAM M-2473).